The primary structure comprises 268 residues: Secreted RxLR effector protein 32 (268 aa).

The N-terminal stretch at 1–21 (MRGAYYVAFALLVAASTRTAA) is a signal peptide. Positions 50–71 (RILRESPDPKDRLPVYASDEER) match the RxLR-dEER motif. A disordered region spans residues 120-257 (PKLEIKKSKR…PTPESLGIGG (138 aa)). The span at 148–161 (SNSKKSLVSSASAK) shows a compositional bias: low complexity. The segment covering 212-224 (NLDKNKRPDEAKI) has biased composition (basic and acidic residues).

Belongs to the RxLR effector family.

It localises to the secreted. It is found in the host cell. Its function is as follows. Secreted effector that completely suppresses the host cell death induced by cell death-inducing proteins. This Plasmopara viticola (Downy mildew of grapevine) protein is Secreted RxLR effector protein 32.